Reading from the N-terminus, the 319-residue chain is Bidirectional sugar transporter SWEET15 (319 aa).

Residues 1–10 lie on the Extracellular side of the membrane; the sequence is MAFMSMERST. A helical transmembrane segment spans residues 11–31; it reads WAFTFGILGNLISLMVFLSPL. The region spanning 13-99 is the MtN3/slv 1 domain; it reads FTFGILGNLI…AMYLAYAPKS (87 aa). Residues 32-50 are Cytoplasmic-facing; the sequence is PTFYRVYRKKSTEGFQSTP. A helical transmembrane segment spans residues 51–71; that stretch reads YVVTLFSCMLWMYYAFVKSGA. Position 72 (Glu-72) is a topological domain, extracellular. A helical transmembrane segment spans residues 73–93; sequence LLVTINGVGCVIETVYLAMYL. The Cytoplasmic portion of the chain corresponds to 94 to 106; that stretch reads AYAPKSARMLTAK. A helical transmembrane segment spans residues 107–127; the sequence is MLLGLNIGLFGVIALVTLLLS. The Extracellular portion of the chain corresponds to 128-134; the sequence is RGELRVH. A helical membrane pass occupies residues 135 to 155; that stretch reads VLGWICVAVSLSVFAAPLSII. The MtN3/slv 2 domain occupies 135-219; sequence VLGWICVAVS…ALYMAYRSKK (85 aa). Topologically, residues 156-167 are cytoplasmic; that stretch reads RLVIRTKSVEFM. Residues 168–188 traverse the membrane as a helical segment; the sequence is PFSLSFFLVLSAVIWFLYGLL. The Extracellular segment spans residues 189–191; that stretch reads KKD. Residues 192–212 traverse the membrane as a helical segment; that stretch reads VFVALPNVLGFVFGVAQMALY. At 213-319 the chain is on the cytoplasmic side; it reads MAYRSKKPLV…KPDMAIVVEV (107 aa).

The protein belongs to the SWEET sugar transporter family. Forms homooligomers and/or heterooligomers.

It is found in the cell membrane. Functionally, mediates both low-affinity uptake and efflux of sugar across the plasma membrane. The sequence is that of Bidirectional sugar transporter SWEET15 (SWEET15) from Oryza sativa subsp. indica (Rice).